The following is a 413-amino-acid chain: PCI domain-containing protein 2 homolog (413 aa).

Residues 222 to 403 form the PCI domain; the sequence is VAYNYFLGRK…QKLVISKTNA (182 aa).

The protein belongs to the CSN12 family.

The protein is PCI domain-containing protein 2 homolog of Caenorhabditis briggsae.